We begin with the raw amino-acid sequence, 652 residues long: Thioredoxin reductase 3 (652 aa).

Over residues M1–R12 the composition is skewed to pro residues. The interval M1 to E62 is disordered. R34 carries the post-translational modification Asymmetric dimethylarginine; alternate. At R34 the chain carries Omega-N-methylarginine; alternate. S50 is modified (phosphoserine). The region spanning R65–D165 is the Glutaredoxin domain. D167–F196 is a binding site for FAD. Residues C212 and C217 are joined by a disulfide bond. K388 carries the N6-succinyllysine modification. The active-site Proton acceptor is H625. Residues C650–U651 constitute a cross-link (cysteinyl-selenocysteine (Cys-Sec)). Position 651 (U651) is a non-standard amino acid, selenocysteine.

Belongs to the class-I pyridine nucleotide-disulfide oxidoreductase family. Homodimer. FAD serves as cofactor. Expressed preferentially in testis where it is found in spermatids and spermatocytes but not in sperm. In elongating spermatids, expressed at the site of mitochondrial sheath formation. Low levels in other tissues including heart, lung, liver, kidney, brain, muscle and prostate.

It localises to the cytoplasm. It is found in the nucleus. The protein localises to the microsome. The protein resides in the endoplasmic reticulum. It catalyses the reaction [thioredoxin]-dithiol + NADP(+) = [thioredoxin]-disulfide + NADPH + H(+). Its function is as follows. Displays thioredoxin reductase, glutaredoxin and glutathione reductase activities. Catalyzes disulfide bond isomerization. Promotes disulfide bond formation between GPX4 and various sperm proteins and may play a role in sperm maturation by promoting formation of sperm structural components. The protein is Thioredoxin reductase 3 of Mus musculus (Mouse).